Here is a 912-residue protein sequence, read N- to C-terminus: Isoleucine--tRNA ligase (912 aa).

The short motif at 57–67 is the 'HIGH' region element; that stretch reads PYANGDIHLGT. An L-isoleucyl-5'-AMP-binding site is contributed by Glu549. The 'KMSKS' region motif lies at 590–594; sequence KMSKS. Lys593 serves as a coordination point for ATP. Zn(2+) contacts are provided by Cys880, Cys883, Cys900, and Cys903.

The protein belongs to the class-I aminoacyl-tRNA synthetase family. IleS type 1 subfamily. Monomer. Zn(2+) serves as cofactor.

Its subcellular location is the cytoplasm. It catalyses the reaction tRNA(Ile) + L-isoleucine + ATP = L-isoleucyl-tRNA(Ile) + AMP + diphosphate. Its function is as follows. Catalyzes the attachment of isoleucine to tRNA(Ile). As IleRS can inadvertently accommodate and process structurally similar amino acids such as valine, to avoid such errors it has two additional distinct tRNA(Ile)-dependent editing activities. One activity is designated as 'pretransfer' editing and involves the hydrolysis of activated Val-AMP. The other activity is designated 'posttransfer' editing and involves deacylation of mischarged Val-tRNA(Ile). The polypeptide is Isoleucine--tRNA ligase (Fervidobacterium pennivorans (strain DSM 9078 / Ven5)).